A 293-amino-acid chain; its full sequence is 3-methyl-2-oxobutanoate hydroxymethyltransferase (293 aa).

Residues 1 to 29 are disordered; the sequence is MTAAHDRSENQPGRPGGETTAPYGSAPRR. The Mg(2+) site is built by Asp73 and Asp112. 3-methyl-2-oxobutanoate contacts are provided by residues 73–74, Asp112, and Lys142; that span reads DS. Glu144 is a Mg(2+) binding site. Glu210 functions as the Proton acceptor in the catalytic mechanism.

The protein belongs to the PanB family. In terms of assembly, homodecamer; pentamer of dimers. Mg(2+) is required as a cofactor.

It localises to the cytoplasm. The enzyme catalyses 3-methyl-2-oxobutanoate + (6R)-5,10-methylene-5,6,7,8-tetrahydrofolate + H2O = 2-dehydropantoate + (6S)-5,6,7,8-tetrahydrofolate. It participates in cofactor biosynthesis; (R)-pantothenate biosynthesis; (R)-pantoate from 3-methyl-2-oxobutanoate: step 1/2. Catalyzes the reversible reaction in which hydroxymethyl group from 5,10-methylenetetrahydrofolate is transferred onto alpha-ketoisovalerate to form ketopantoate. The sequence is that of 3-methyl-2-oxobutanoate hydroxymethyltransferase from Saccharopolyspora erythraea (strain ATCC 11635 / DSM 40517 / JCM 4748 / NBRC 13426 / NCIMB 8594 / NRRL 2338).